A 341-amino-acid polypeptide reads, in one-letter code: S-adenosylmethionine:tRNA ribosyltransferase-isomerase (341 aa).

It belongs to the QueA family. As to quaternary structure, monomer.

It is found in the cytoplasm. It catalyses the reaction 7-aminomethyl-7-carbaguanosine(34) in tRNA + S-adenosyl-L-methionine = epoxyqueuosine(34) in tRNA + adenine + L-methionine + 2 H(+). It participates in tRNA modification; tRNA-queuosine biosynthesis. Functionally, transfers and isomerizes the ribose moiety from AdoMet to the 7-aminomethyl group of 7-deazaguanine (preQ1-tRNA) to give epoxyqueuosine (oQ-tRNA). The chain is S-adenosylmethionine:tRNA ribosyltransferase-isomerase from Chlorobium phaeovibrioides (strain DSM 265 / 1930) (Prosthecochloris vibrioformis (strain DSM 265)).